Here is a 678-residue protein sequence, read N- to C-terminus: RNA helicase NPH-II (678 aa).

The Helicase ATP-binding domain occupies 175 to 351 (FTSWARRVPV…EFFAESVFVH (177 aa)). 188–195 (GDTGVGKT) is an ATP binding site. The short motif at 300–303 (DEVH) is the DEXH box element. One can recognise a Helicase C-terminal domain in the interval 371 to 546 (PLNRFMYIEE…VFDLQLPEDL (176 aa)).

The protein belongs to the DEAD box helicase family. DEAH subfamily. As to quaternary structure, monomer.

The protein localises to the virion. The catalysed reaction is ATP + H2O = ADP + phosphate + H(+). Its function is as follows. NTP-dependent helicase that catalyzes unidirectional unwinding of 3'tailed duplex RNAs and plays an important role during transcription of early mRNAs, presumably by preventing R-loop formation behind the elongating RNA polymerase. Might also play a role in the export of newly synthesized mRNA chains out of the core into the cytoplasm. Required for replication and propagation of viral particles. This chain is RNA helicase NPH-II (OPG084), found in Oryctolagus cuniculus (Rabbit).